Reading from the N-terminus, the 271-residue chain is Type III pantothenate kinase (271 aa).

Position 6–13 (6–13 (DVRNTNIV)) interacts with ATP. A substrate-binding site is contributed by 109–112 (GADR). D111 (proton acceptor) is an active-site residue. A K(+)-binding site is contributed by D131. Position 134 (T134) interacts with ATP. T186 serves as a coordination point for substrate.

This sequence belongs to the type III pantothenate kinase family. Homodimer. NH4(+) serves as cofactor. It depends on K(+) as a cofactor.

It is found in the cytoplasm. The catalysed reaction is (R)-pantothenate + ATP = (R)-4'-phosphopantothenate + ADP + H(+). It participates in cofactor biosynthesis; coenzyme A biosynthesis; CoA from (R)-pantothenate: step 1/5. In terms of biological role, catalyzes the phosphorylation of pantothenate (Pan), the first step in CoA biosynthesis. This chain is Type III pantothenate kinase, found in Rhodococcus opacus (strain B4).